The chain runs to 253 residues: Molybdate import ATP-binding protein MolC (253 aa).

The ABC transporter domain maps to 5-229; it reads LSVENLGFYY…NLTALFHLPM (225 aa). Position 38 to 45 (38 to 45) interacts with ATP; it reads GQNGCGKS.

Belongs to the ABC transporter superfamily. In terms of assembly, the complex is composed of two ATP-binding proteins (MolC), two transmembrane proteins (MolB) and a solute-binding protein (MolA).

It localises to the cell inner membrane. It catalyses the reaction molybdate(out) + ATP + H2O = molybdate(in) + ADP + phosphate + H(+). With respect to regulation, the MolBCA complex shows a decrease in affinity in the presence of increasing concentrations of substrate and nucleotide. Functionally, part of the ABC transporter complex MolBCA involved in molybdate import. Responsible for energy coupling to the transport system. Functions as a low-affinity molybdate transporter. The polypeptide is Molybdate import ATP-binding protein MolC (Haemophilus influenzae (strain ATCC 51907 / DSM 11121 / KW20 / Rd)).